The following is a 678-amino-acid chain: Penicillin-binding protein activator LpoA (678 aa).

The first 26 residues, methionine 1–glycine 26, serve as a signal peptide directing secretion. Cysteine 27 carries the N-palmitoyl cysteine lipid modification. Cysteine 27 is lipidated: S-diacylglycerol cysteine. Low complexity predominate over residues alanine 300–glutamine 310. Disordered stretches follow at residues alanine 300–alanine 340 and alanine 496–phenylalanine 528. Residues threonine 311 to threonine 327 are compositionally biased toward polar residues. Composition is skewed to low complexity over residues glutamine 330 to alanine 340 and threonine 513 to phenylalanine 528.

The protein belongs to the LpoA family. Interacts with PBP1a.

Its subcellular location is the cell outer membrane. In terms of biological role, regulator of peptidoglycan synthesis that is essential for the function of penicillin-binding protein 1A (PBP1a). The chain is Penicillin-binding protein activator LpoA from Shigella flexneri serotype X (strain 2002017).